The primary structure comprises 357 residues: 3-isopropylmalate dehydrogenase (357 aa).

75–88 (GPKWEHLPPAEQPE) serves as a coordination point for NAD(+). Residues Arg96, Arg106, Arg135, and Asp224 each contribute to the substrate site. Residues Asp224, Asp248, and Asp252 each coordinate Mg(2+). Residue 282–294 (GSAPDIAGQGIAN) participates in NAD(+) binding.

Belongs to the isocitrate and isopropylmalate dehydrogenases family. LeuB type 1 subfamily. In terms of assembly, homodimer. It depends on Mg(2+) as a cofactor. Mn(2+) is required as a cofactor.

The protein resides in the cytoplasm. The catalysed reaction is (2R,3S)-3-isopropylmalate + NAD(+) = 4-methyl-2-oxopentanoate + CO2 + NADH. It functions in the pathway amino-acid biosynthesis; L-leucine biosynthesis; L-leucine from 3-methyl-2-oxobutanoate: step 3/4. Catalyzes the oxidation of 3-carboxy-2-hydroxy-4-methylpentanoate (3-isopropylmalate) to 3-carboxy-4-methyl-2-oxopentanoate. The product decarboxylates to 4-methyl-2 oxopentanoate. The sequence is that of 3-isopropylmalate dehydrogenase from Desulfotalea psychrophila (strain LSv54 / DSM 12343).